A 121-amino-acid chain; its full sequence is NADH-quinone oxidoreductase subunit A 2 (121 aa).

3 helical membrane passes run 6–26 (FLPVLFMVTGIVLVAAATLFV), 60–80 (VPFFILAILLVVFDVEAMFLF), and 89–109 (IGFVGYIEMFVFMLLLLVGFA).

Belongs to the complex I subunit 3 family. As to quaternary structure, NDH-1 is composed of 14 different subunits. Subunits NuoA, H, J, K, L, M, N constitute the membrane sector of the complex.

It localises to the cell inner membrane. It carries out the reaction a quinone + NADH + 5 H(+)(in) = a quinol + NAD(+) + 4 H(+)(out). Functionally, NDH-1 shuttles electrons from NADH, via FMN and iron-sulfur (Fe-S) centers, to quinones in the respiratory chain. The immediate electron acceptor for the enzyme in this species is believed to be ubiquinone. Couples the redox reaction to proton translocation (for every two electrons transferred, four hydrogen ions are translocated across the cytoplasmic membrane), and thus conserves the redox energy in a proton gradient. The polypeptide is NADH-quinone oxidoreductase subunit A 2 (Rhizobium meliloti (strain 1021) (Ensifer meliloti)).